A 427-amino-acid chain; its full sequence is 3-phosphoshikimate 1-carboxyvinyltransferase (427 aa).

The 3-phosphoshikimate site is built by Lys-20, Ser-21, and Arg-25. Residue Lys-20 participates in phosphoenolpyruvate binding. 2 residues coordinate phosphoenolpyruvate: Gly-92 and Arg-120. Positions 165, 167, 313, and 340 each coordinate 3-phosphoshikimate. Gln-167 is a phosphoenolpyruvate binding site. The active-site Proton acceptor is the Asp-313. Phosphoenolpyruvate is bound by residues Arg-344 and Arg-388.

This sequence belongs to the EPSP synthase family. As to quaternary structure, monomer.

The protein localises to the cytoplasm. The catalysed reaction is 3-phosphoshikimate + phosphoenolpyruvate = 5-O-(1-carboxyvinyl)-3-phosphoshikimate + phosphate. It participates in metabolic intermediate biosynthesis; chorismate biosynthesis; chorismate from D-erythrose 4-phosphate and phosphoenolpyruvate: step 6/7. In terms of biological role, catalyzes the transfer of the enolpyruvyl moiety of phosphoenolpyruvate (PEP) to the 5-hydroxyl of shikimate-3-phosphate (S3P) to produce enolpyruvyl shikimate-3-phosphate and inorganic phosphate. The chain is 3-phosphoshikimate 1-carboxyvinyltransferase from Geobacillus kaustophilus (strain HTA426).